The following is a 213-amino-acid chain: Thiopurine S-methyltransferase (213 aa).

Residues Trp-10, Leu-46, Glu-67, and Arg-124 each contribute to the S-adenosyl-L-methionine site.

Belongs to the class I-like SAM-binding methyltransferase superfamily. TPMT family.

It is found in the cytoplasm. It carries out the reaction S-adenosyl-L-methionine + a thiopurine = S-adenosyl-L-homocysteine + a thiopurine S-methylether.. This chain is Thiopurine S-methyltransferase, found in Xanthobacter autotrophicus (strain ATCC BAA-1158 / Py2).